We begin with the raw amino-acid sequence, 156 residues long: Peptide deformylase 1 (156 aa).

Residues C90 and H132 each contribute to the Fe cation site. The active site involves E133. Fe cation is bound at residue H136.

Belongs to the polypeptide deformylase family. Requires Fe(2+) as cofactor.

The catalysed reaction is N-terminal N-formyl-L-methionyl-[peptide] + H2O = N-terminal L-methionyl-[peptide] + formate. Its function is as follows. Removes the formyl group from the N-terminal Met of newly synthesized proteins. Requires at least a dipeptide for an efficient rate of reaction. N-terminal L-methionine is a prerequisite for activity but the enzyme has broad specificity at other positions. In Bacillus anthracis, this protein is Peptide deformylase 1.